Here is a 284-residue protein sequence, read N- to C-terminus: BTB/POZ domain-containing protein 2 (284 aa).

The BTB domain maps to 37–108; the sequence is SDTTLIIKGE…LYCDSPRIPA (72 aa).

In terms of assembly, interacts with cul3.

The protein localises to the cytoplasm. It is found in the nucleus. Its pathway is protein modification; protein ubiquitination. In terms of biological role, probable substrate-specific adapter of an E3 ubiquitin-protein ligase complex which mediates the ubiquitination and subsequent proteasomal degradation of target proteins. The chain is BTB/POZ domain-containing protein 2 (btb2) from Schizosaccharomyces pombe (strain 972 / ATCC 24843) (Fission yeast).